A 474-amino-acid polypeptide reads, in one-letter code: B-cell CLL/lymphoma 6 member B protein (474 aa).

In terms of domain architecture, BTB spans 38-105 (TDVTLLVGGQ…MYTSRLRLSP (68 aa)). Disordered stretches follow at residues 144 to 190 (PVEV…PDPK) and 210 to 249 (GSLV…GLQS). Over residues 150–160 (PRPPTVAPPGS) the composition is skewed to pro residues. Residues 162–172 (RRSEGHPDPPT) are compositionally biased toward basic and acidic residues. 3 stretches are compositionally biased toward polar residues: residues 173-183 (ESRSCSQGSPS), 210-220 (GSLVGESSGQP), and 240-249 (EEGTTPGLQS). 5 consecutive C2H2-type zinc fingers follow at residues 323–345 (YKCQ…RTVH), 351–373 (YRCS…SRIH), 379–401 (YKCE…VLIH), 407–429 (YPCP…VRIH), and 435–458 (YHCD…RQKH).

As to quaternary structure, associates with BCL6 through the BTB domain. In terms of tissue distribution, ubiquitously expressed with higher expression found in heart and lung.

It is found in the nucleus. Acts as a sequence-specific transcriptional repressor in association with BCL6. Necessary for activation of naive T-cells to antigenic stimulation. May attenuate the regulatory effect of BCL6 on antigenic activation of naive CD4 T-cells by forming a heterodimer with BCL6. The sequence is that of B-cell CLL/lymphoma 6 member B protein (Bcl6b) from Mus musculus (Mouse).